The following is a 96-amino-acid chain: Small ribosomal subunit protein bS18 (96 aa).

It belongs to the bacterial ribosomal protein bS18 family. As to quaternary structure, part of the 30S ribosomal subunit. Forms a tight heterodimer with protein bS6.

Binds as a heterodimer with protein bS6 to the central domain of the 16S rRNA, where it helps stabilize the platform of the 30S subunit. The protein is Small ribosomal subunit protein bS18 of Gluconobacter oxydans (strain 621H) (Gluconobacter suboxydans).